The following is a 141-amino-acid chain: ATP synthase epsilon chain (141 aa).

This sequence belongs to the ATPase epsilon chain family. As to quaternary structure, F-type ATPases have 2 components, CF(1) - the catalytic core - and CF(0) - the membrane proton channel. CF(1) has five subunits: alpha(3), beta(3), gamma(1), delta(1), epsilon(1). CF(0) has three main subunits: a, b and c.

Its subcellular location is the cell inner membrane. Produces ATP from ADP in the presence of a proton gradient across the membrane. This is ATP synthase epsilon chain from Paraburkholderia phymatum (strain DSM 17167 / CIP 108236 / LMG 21445 / STM815) (Burkholderia phymatum).